A 492-amino-acid polypeptide reads, in one-letter code: Catalase isozyme C (492 aa).

R62 contacts heme. H65 is a catalytic residue. R102 contributes to the heme binding site. Residue N138 is part of the active site. A heme-binding site is contributed by F151. At Y210 the chain carries Phosphotyrosine; by STRK1. The segment at residues 325–348 (CPGIIVPGIYYSDDKLLQTRIFSY) is a cross-link (3-(S-cysteinyl)-tyrosine (Cys-Tyr)). The heme site is built by R344, Y348, and R355. Positions 484–492 (SRLSAKPSM) match the Peroxisome targeting signal motif.

The protein belongs to the catalase family. In terms of assembly, homotetramer. Interacts with GLO1 and GLO4; these interactions are disturbed by alpha-hydroxy-2-pyridinemethanesulfonic acid (HPMS) and salicylic acid (SA). Interacts with STRK1 at the plasma membrane. Requires heme as cofactor. Activated by STRK1-mediated phosphorylation at Tyr-210 upon salt and oxidative stress. As to expression, highly expressed in mature leaves. Mainly expressed in leaf blades, stems, panicles, leaf sheaths, and culms, but barely in roots.

It localises to the peroxisome. The protein localises to the glyoxysome. Its subcellular location is the cell membrane. The enzyme catalyses 2 H2O2 = O2 + 2 H2O. Its activity is regulated as follows. Strongly inhibited by beta-mercaptoethanol, sodium azide and potassium cyanide. Slightly repressed by 3-amino-1,2,4-triazole (3-AT). Activity is repressed proportionally to increased concentration of NaCl, KCl, LiCl and MgCl(2). In terms of biological role, occurs in almost all aerobically respiring organisms and serves to protect cells from the toxic effects of hydrogen peroxide. Responsible for the redox homeostasis in leaves. Prevents nitric oxide (NO) accumulation and subsequent NO-mediated leaf cell death as well as the S-nitrosylation of specific proteins (e.g. glyceraldehyde 3-phosphate dehydrogenase and thioredoxin) by degrading H(2)O(2). Involved in photorespiration. Promotes drought stress tolerance and recovery. Involved in NO-mediated enhanced tolerance to zinc oxide nanoparticles (ZnO NPs)-induced phytotoxicity. Participates in melatonin-mediated detoxification. The chain is Catalase isozyme C from Oryza sativa subsp. japonica (Rice).